Consider the following 200-residue polypeptide: Serotonin N-acetyltransferase 2, chloroplastic (200 aa).

A chloroplast-targeting transit peptide spans 1–41 (MQMQAARPRVGVRPRGGIRPFPLPTLSFNNNSNRSACACAC). Residues 55–195 (FAVRRSSTGL…MAFYRSRQQI (141 aa)) enclose the N-acetyltransferase domain.

The protein resides in the cytoplasm. It is found in the plastid. It localises to the chloroplast. It carries out the reaction serotonin + acetyl-CoA = N-acetylserotonin + CoA + H(+). It catalyses the reaction tyramine + acetyl-CoA = N-acetyltyramine + CoA + H(+). The catalysed reaction is tryptamine + acetyl-CoA = N-acetyltryptamine + CoA + H(+). The enzyme catalyses 5-methoxytryptamine + acetyl-CoA = melatonin + CoA + H(+). It functions in the pathway aromatic compound metabolism; melatonin biosynthesis; melatonin from serotonin: step 1/2. Functionally, catalyzes the N-acetylation of serotonin into N-acetylserotonin, the penultimate step in the synthesis of melatonin. Catalyzes in vitro the N-acetylation of tryptamine to produce N-acetyltryptamine, 5-methoxytryptamine to produce melatonin and tyramine to produce N-acetyltyramine. The polypeptide is Serotonin N-acetyltransferase 2, chloroplastic (Oryza sativa subsp. japonica (Rice)).